We begin with the raw amino-acid sequence, 449 residues long: Bifunctional protein GlmU (449 aa).

The interval 1–229 (MNHFAVILAA…FEETIGVNDR (229 aa)) is pyrophosphorylase. Residues 8-11 (LAAG), Lys-22, Gln-72, and 77-78 (GT) contribute to the UDP-N-acetyl-alpha-D-glucosamine site. Asp-102 contributes to the Mg(2+) binding site. Residues Gly-139, Glu-154, Asn-169, and Asn-227 each contribute to the UDP-N-acetyl-alpha-D-glucosamine site. Residue Asn-227 coordinates Mg(2+). Residues 230–250 (VALAQAETSMRKRTNEHWMRQ) form a linker region. An N-acetyltransferase region spans residues 251–449 (GVTFIDPAST…ERQTTKPDYR (199 aa)). 2 residues coordinate UDP-N-acetyl-alpha-D-glucosamine: Arg-332 and Lys-350. The active-site Proton acceptor is His-362. UDP-N-acetyl-alpha-D-glucosamine contacts are provided by Tyr-365 and Asn-376. Acetyl-CoA contacts are provided by residues 385–386 (NY), Ala-422, and Arg-439.

This sequence in the N-terminal section; belongs to the N-acetylglucosamine-1-phosphate uridyltransferase family. The protein in the C-terminal section; belongs to the transferase hexapeptide repeat family. In terms of assembly, homotrimer. Requires Mg(2+) as cofactor.

It is found in the cytoplasm. The catalysed reaction is alpha-D-glucosamine 1-phosphate + acetyl-CoA = N-acetyl-alpha-D-glucosamine 1-phosphate + CoA + H(+). It carries out the reaction N-acetyl-alpha-D-glucosamine 1-phosphate + UTP + H(+) = UDP-N-acetyl-alpha-D-glucosamine + diphosphate. Its pathway is nucleotide-sugar biosynthesis; UDP-N-acetyl-alpha-D-glucosamine biosynthesis; N-acetyl-alpha-D-glucosamine 1-phosphate from alpha-D-glucosamine 6-phosphate (route II): step 2/2. It participates in nucleotide-sugar biosynthesis; UDP-N-acetyl-alpha-D-glucosamine biosynthesis; UDP-N-acetyl-alpha-D-glucosamine from N-acetyl-alpha-D-glucosamine 1-phosphate: step 1/1. The protein operates within bacterial outer membrane biogenesis; LPS lipid A biosynthesis. Functionally, catalyzes the last two sequential reactions in the de novo biosynthetic pathway for UDP-N-acetylglucosamine (UDP-GlcNAc). The C-terminal domain catalyzes the transfer of acetyl group from acetyl coenzyme A to glucosamine-1-phosphate (GlcN-1-P) to produce N-acetylglucosamine-1-phosphate (GlcNAc-1-P), which is converted into UDP-GlcNAc by the transfer of uridine 5-monophosphate (from uridine 5-triphosphate), a reaction catalyzed by the N-terminal domain. This Exiguobacterium sibiricum (strain DSM 17290 / CCUG 55495 / CIP 109462 / JCM 13490 / 255-15) protein is Bifunctional protein GlmU.